The sequence spans 198 residues: ATP-dependent Clp protease proteolytic subunit 1 (198 aa).

Residue Ser98 is the Nucleophile of the active site. Residue His123 is part of the active site.

The protein belongs to the peptidase S14 family. As to quaternary structure, fourteen ClpP subunits assemble into 2 heptameric rings which stack back to back to give a disk-like structure with a central cavity, resembling the structure of eukaryotic proteasomes.

It localises to the cytoplasm. It catalyses the reaction Hydrolysis of proteins to small peptides in the presence of ATP and magnesium. alpha-casein is the usual test substrate. In the absence of ATP, only oligopeptides shorter than five residues are hydrolyzed (such as succinyl-Leu-Tyr-|-NHMec, and Leu-Tyr-Leu-|-Tyr-Trp, in which cleavage of the -Tyr-|-Leu- and -Tyr-|-Trp bonds also occurs).. Its function is as follows. Cleaves peptides in various proteins in a process that requires ATP hydrolysis. Has a chymotrypsin-like activity. Plays a major role in the degradation of misfolded proteins. The sequence is that of ATP-dependent Clp protease proteolytic subunit 1 from Leptospira interrogans serogroup Icterohaemorrhagiae serovar copenhageni (strain Fiocruz L1-130).